Reading from the N-terminus, the 588-residue chain is Adenine deaminase (588 aa).

This sequence belongs to the metallo-dependent hydrolases superfamily. Adenine deaminase family. As to quaternary structure, homodimer. The cofactor is Mn(2+).

It catalyses the reaction adenine + H2O + H(+) = hypoxanthine + NH4(+). This Escherichia coli (strain K12 / DH10B) protein is Adenine deaminase.